Consider the following 354-residue polypeptide: Mitogen-activated protein kinase kinase 1 (354 aa).

In terms of domain architecture, Protein kinase spans 68 to 328; the sequence is LEVIKVIGKG…AKELLEHKFV (261 aa). ATP-binding positions include 74–82 and K97; that span reads IGKGSSGNV. D190 functions as the Proton acceptor in the catalytic mechanism. The residue at position 218 (T218) is a Phosphothreonine. The residue at position 224 (S224) is a Phosphoserine. Position 228 is a phosphothreonine (T228).

This sequence belongs to the protein kinase superfamily. STE Ser/Thr protein kinase family. MAP kinase kinase subfamily. As to quaternary structure, interacts with MEKK1 and MPK4. May form a ternary complex composed of MEKK1 and MKK1/MKK2 and MPK4. Interacts with P.syringae type III effector HopF2. Interacts with MPK11. Post-translationally, phosphorylation at Thr-218 and Ser-224 by MAP kinase kinase kinases positively regulates kinase activity. As to expression, expressed in roots, stem, flowers and siliques.

It carries out the reaction L-seryl-[protein] + ATP = O-phospho-L-seryl-[protein] + ADP + H(+). The enzyme catalyses L-threonyl-[protein] + ATP = O-phospho-L-threonyl-[protein] + ADP + H(+). It catalyses the reaction L-tyrosyl-[protein] + ATP = O-phospho-L-tyrosyl-[protein] + ADP + H(+). Activated through serine and threonine phosphorylation in response to wounding, cold, drought, salt stresses, abscisic acid (ABA), hydrogen peroxide, bacterial flagellin and laminarin beta-glucan. Functionally, MEKK1, MKK1/MKK2 and MPK4/MPK6 function in a signaling pathway that modulates the expression of genes responding to biotic and abiotic stresses and also plays an important role in pathogen defense by negatively regulating innate immunity. Activates by phosphorylation the downstream MPK4. Acts redundantly with MKK2. MKK1-MPK6 module mediates abscisic acid (ABA)-dependent CAT1 expression with H(2)O(2) production and response to drought and salt stress. MKK1-MPK6 module is also involved in sugar signaling during the process of seed germination. This Arabidopsis thaliana (Mouse-ear cress) protein is Mitogen-activated protein kinase kinase 1 (MKK1).